Here is a 712-residue protein sequence, read N- to C-terminus: Methionine--tRNA ligase (712 aa).

Residues 20–30 (PYANGKAHIGH) carry the 'HIGH' region motif. 4 residues coordinate Zn(2+): cysteine 151, cysteine 154, cysteine 163, and cysteine 167. A 'KMSKS' region motif is present at residues 334 to 338 (KFSKT). Lysine 337 provides a ligand contact to ATP. The segment at 559–585 (ANAKKSAAKGGEKEPSKSEGMGPSEEA) is disordered. The tRNA-binding domain maps to 610–712 (DFAKLDIRVG…KEIKPGSRIR (103 aa)).

It belongs to the class-I aminoacyl-tRNA synthetase family. MetG type 1 subfamily. Homodimer. It depends on Zn(2+) as a cofactor.

The protein resides in the cytoplasm. It carries out the reaction tRNA(Met) + L-methionine + ATP = L-methionyl-tRNA(Met) + AMP + diphosphate. Is required not only for elongation of protein synthesis but also for the initiation of all mRNA translation through initiator tRNA(fMet) aminoacylation. This Methanosarcina acetivorans (strain ATCC 35395 / DSM 2834 / JCM 12185 / C2A) protein is Methionine--tRNA ligase.